A 248-amino-acid chain; its full sequence is UDP-2,3-diacylglucosamine hydrolase (248 aa).

5 residues coordinate Mn(2+): Asp7, His9, Asp40, Asn78, and His113. 78–79 (NR) is a substrate binding site. Residues Asp121, Ser159, Thr163, Lys166, and His194 each coordinate substrate. 2 residues coordinate Mn(2+): His194 and His196.

It belongs to the LpxH family. Mn(2+) is required as a cofactor.

It localises to the cell inner membrane. The catalysed reaction is UDP-2-N,3-O-bis[(3R)-3-hydroxytetradecanoyl]-alpha-D-glucosamine + H2O = 2-N,3-O-bis[(3R)-3-hydroxytetradecanoyl]-alpha-D-glucosaminyl 1-phosphate + UMP + 2 H(+). It functions in the pathway glycolipid biosynthesis; lipid IV(A) biosynthesis; lipid IV(A) from (3R)-3-hydroxytetradecanoyl-[acyl-carrier-protein] and UDP-N-acetyl-alpha-D-glucosamine: step 4/6. Hydrolyzes the pyrophosphate bond of UDP-2,3-diacylglucosamine to yield 2,3-diacylglucosamine 1-phosphate (lipid X) and UMP by catalyzing the attack of water at the alpha-P atom. Involved in the biosynthesis of lipid A, a phosphorylated glycolipid that anchors the lipopolysaccharide to the outer membrane of the cell. The protein is UDP-2,3-diacylglucosamine hydrolase of Pseudomonas syringae pv. tomato (strain ATCC BAA-871 / DC3000).